A 301-amino-acid chain; its full sequence is Small ribosomal subunit protein uS2 (301 aa).

A disordered region spans residues 282 to 301 (VRKQPVSENENVEAAAAEQK). The segment covering 289 to 301 (ENENVEAAAAEQK) has biased composition (low complexity).

The protein belongs to the universal ribosomal protein uS2 family.

The chain is Small ribosomal subunit protein uS2 from Koribacter versatilis (strain Ellin345).